A 123-amino-acid chain; its full sequence is Ig heavy chain V region H8 (123 aa).

An Ig-like domain is found at 1-114 (EVKLVESGGG…BSYWYFDVWG (114 aa)).

The sequence is that of Ig heavy chain V region H8 from Mus musculus (Mouse).